The chain runs to 455 residues: MHQRALLFSAFWTAVQAQQAGTLTAETHPSLTWQKCAAGGTCTEQKGSVVLDSNWRWLHSVDGSTNCYTGNTWDATLCPDNESCASNCALDGADYEGTYGVTTSGDALTLQFVTGANIGSRLYLMADDDESYQTFNLLNNEFTFDVDASKLPCGLNGAVYFVSMDADGGVAKYSTNKAGAKYGTGYCDSQCPRDLKFINGQANVEGWEPSDSDKNAGVGGHGSCCPEMDIWEANSISTAYTPHPCDDTAQTMCEGDTCGGTYSSERYAGTCDPDGCDFNAYRMGNESFYGPSKLVDSSSPVTVVTQFITADGTDSGALSEIKRFYVQGGKVIANAASNVDGVTGNSITADFCTAQKKAFGDDDIFAQHGGLQGMGNALSSMVLTLSIWDDHHSSMMWLDSSYPEDADATAPGVARGTCEPHAGDPEKVESQSGSATVTYSNIKYGPIGSTFDAPA.

The N-terminal stretch at 1–17 is a signal peptide; the sequence is MHQRALLFSAFWTAVQA. N-linked (GlcNAc...) asparagine glycosylation is present at asparagine 81. Glutamate 227 acts as the Nucleophile in catalysis. Glutamate 232 serves as the catalytic Proton donor. N-linked (GlcNAc...) asparagine glycosylation occurs at asparagine 285.

This sequence belongs to the glycosyl hydrolase 7 (cellulase C) family.

The protein localises to the secreted. The catalysed reaction is Hydrolysis of (1-&gt;4)-beta-D-glucosidic linkages in cellulose and cellotetraose, releasing cellobiose from the non-reducing ends of the chains.. In terms of biological role, the biological conversion of cellulose to glucose generally requires three types of hydrolytic enzymes: (1) Endoglucanases which cut internal beta-1,4-glucosidic bonds; (2) Exocellobiohydrolases that cut the disaccharide cellobiose from the non-reducing end of the cellulose polymer chain; (3) Beta-1,4-glucosidases which hydrolyze the cellobiose and other short cello-oligosaccharides to glucose. The polypeptide is Probable 1,4-beta-D-glucan cellobiohydrolase A (cbhA) (Aspergillus flavus (strain ATCC 200026 / FGSC A1120 / IAM 13836 / NRRL 3357 / JCM 12722 / SRRC 167)).